The primary structure comprises 475 residues: Ubiquitin carboxyl-terminal hydrolase calypso (475 aa).

The UCH catalytic domain maps to 44–275; that stretch reads GWLELESDPG…IRFNLMAVVP (232 aa). Cys130 (nucleophile) is an active-site residue. His212 acts as the Proton donor in catalysis. Positions 333-360 form a coiled coil; that stretch reads AKDLQLLLKNLDTEIAINEQNLADENDR. A ULD domain is found at 374 to 402; it reads NYDKFICTFLSMLAHQGVLGELVSQHLLP. Positions 404–475 are positively charged C-terminal tail required for binding nucleosomes; sequence KKVSGQSAAN…KGRNKCRKRK (72 aa). The disordered stretch occupies residues 411–475; it reads AANRISKQNS…KGRNKCRKRK (65 aa). A compositionally biased stretch (low complexity) spans 419–460; it reads NSAASSAGANAGAAAGVTPKSQQQQQQPQTAASKNGKSPGKT. Residues 461–475 are compositionally biased toward basic residues; it reads PGRRRKGRNKCRKRK.

Belongs to the peptidase C12 family. BAP1 subfamily. As to quaternary structure, catalytic component of the polycomb repressive deubiquitinase (PR-DUB) complex, at least composed of caly/calypso, Asx and sba (MBD5/6 homolog). The PR-DUB complex associates with nucleosomes to mediate deubiquitination of histone H2AK118ub1 substrates; the association requires the positively charged C-terminal tail of caly, probably due to direct binding of DNA. Interacts (via ULD domain) with Asx (via DEUBAD domain); the interaction produces a stable heterodimer with a composite binding site for ubiquitin. Homodimerizes (via coiled-coil hinge-region between the UCH and ULD domains) to mediate assembly of 2 copies of the caly-Asx heterodimer into a bisymmetric tetramer; dimerization enhances PR-DUB association with nucleosomes.

Its subcellular location is the nucleus. It catalyses the reaction Thiol-dependent hydrolysis of ester, thioester, amide, peptide and isopeptide bonds formed by the C-terminal Gly of ubiquitin (a 76-residue protein attached to proteins as an intracellular targeting signal).. In terms of biological role, catalytic component of the polycomb repressive deubiquitinase (PR-DUB) complex, a complex that specifically mediates deubiquitination of histone H2A monoubiquitinated at 'Lys-119' (H2AK118ub1). Mediates bisymmetric organization of the PR-DUB complex and is involved in association with nucleosomes to mediate deubiquitination. Does not deubiquitinate monoubiquitinated histone H2B. Required to maintain the transcriptionally repressive state of homeotic genes throughout development. The PR-DUB complex has weak or no activity toward 'Lys-48'- and 'Lys-63'-linked polyubiquitin chains. Polycomb group (PcG) protein. The chain is Ubiquitin carboxyl-terminal hydrolase calypso from Drosophila persimilis (Fruit fly).